The chain runs to 1378 residues: S-cell enriched with leucine-rich repeat-containing protein slrA (1378 aa).

Residues 17–37 traverse the membrane as a helical segment; the sequence is IFKILYCYLFTSLLLILSTWV. Asparagine 59, asparagine 112, asparagine 143, asparagine 172, and asparagine 201 each carry an N-linked (GlcNAc...) asparagine glycan. LRR repeat units lie at residues 143-165, 167-188, 191-212, 213-235, 236-257, 260-281, 282-304, 307-329, and 331-353; these read NLTGIDLSNNNLKGNITPYLPYL, HLRNLNLSNNHLSGCFPDGLLK, SLVALDLSYNNISCTLSLADSK, AISYIDISHNHLTGYFKNVWKTP, NLLFLDLSFNKLYGTILKEFFR, SLDYVNLSSNQLIGFLPILSKS, RISYLNISNNRLIGNITLLTCWK, SLRIFDAENNMFEGALPESIFDH, and PLQYVNLKGNIVKDPLPSILDCA. Asparagine 265, asparagine 287, and asparagine 296 each carry an N-linked (GlcNAc...) asparagine glycan. N-linked (GlcNAc...) asparagine glycans are attached at residues asparagine 416, asparagine 436, asparagine 451, asparagine 491, asparagine 513, asparagine 596, asparagine 605, asparagine 634, asparagine 704, asparagine 710, asparagine 740, asparagine 741, asparagine 771, asparagine 788, asparagine 801, asparagine 826, asparagine 843, asparagine 861, asparagine 875, and asparagine 907. The stretch at 886–946 forms a coiled coil; sequence SLNNNNNNNN…NNNENNNENK (61 aa). Over residues 891 to 909 the composition is skewed to low complexity; it reads NNNNNNNNNKNNNNNNNDS. Residues 891–945 are disordered; it reads NNNNNNNNNKNNNNNNNDSNNEKEVVEDEEEDLDYSSQNDNNNINNNNNENNNEN. Acidic residues predominate over residues 915–924; the sequence is VVEDEEEDLD. Positions 929–945 are enriched in low complexity; the sequence is NDNNNINNNNNENNNEN. 4 N-linked (GlcNAc...) asparagine glycosylation sites follow: asparagine 953, asparagine 970, asparagine 1090, and asparagine 1100. A helical membrane pass occupies residues 1160 to 1180; the sequence is YYIVFFGCASGLILVLVICIV. Residues 1227 to 1276 are compositionally biased toward low complexity; it reads DLNNNNNNNNNNNNNNNNNNNNNNNNNNNNNNNNNFNDGSDTFNNNNKKN. The segment at 1227–1378 is disordered; it reads DLNNNNNNNN…KKHLTIINKK (152 aa). Over residues 1289–1304 the composition is skewed to basic and acidic residues; it reads DGKENDIKNINNKKDE. Acidic residues predominate over residues 1305 to 1324; that stretch reads KEDDGDDDDDEDDDEYEDDT. Residues 1328–1353 show a composition bias toward low complexity; the sequence is SSGNSSRSKGSDGGSSSNSLSSDKQS. 2 N-linked (GlcNAc...) asparagine glycosylation sites follow: asparagine 1331 and asparagine 1360. Residues 1354-1364 are compositionally biased toward polar residues; sequence FNNGNENNSII. Residues 1368-1378 are compositionally biased toward basic residues; that stretch reads KKKHLTIINKK.

It is found in the membrane. This chain is S-cell enriched with leucine-rich repeat-containing protein slrA (slrA), found in Dictyostelium discoideum (Social amoeba).